The following is a 946-amino-acid chain: Inhibin beta chain (946 aa).

Disordered regions lie at residues 115 to 142 (VADR…SSTS) and 174 to 194 (KSRN…RRRR). Low complexity predominate over residues 128 to 142 (VSVPTTPNETPSSTS). N-linked (GlcNAc...) asparagine glycosylation is found at N208, N217, N271, and N389. The tract at residues 436–462 (SPGSHLFNGRGGRTDQRSERDPSHHKY) is disordered. Basic and acidic residues predominate over residues 447 to 459 (GRTDQRSERDPSH). Residues N471, N484, N542, N561, N566, N732, and N804 are each glycosylated (N-linked (GlcNAc...) asparagine). 4 disulfides stabilise this stretch: C837–C846, C845–C912, C874–C943, and C878–C945.

It belongs to the TGF-beta family. In terms of assembly, homodimer or heterodimer; disulfide-linked. Post-translationally, cleaved in vitro by metalloproteases tok and tld to produce a 30 kDa product. Widely expressed in larval brains.

The protein resides in the secreted. In terms of biological role, controls several aspects of neuronal morphogenesis; essential for optic lobe development, EcR-B1 expression in larval brains, mushroom body remodeling, dorsal neuron morphogenesis and motoneuron axon guidance. Ligands Actbeta and daw act redundantly through the Activin receptor Babo and its transcriptional mediator Smad2 (Smox), to regulate neuroblast numbers and proliferation rates in the developing larval brain. The polypeptide is Inhibin beta chain (Actbeta) (Drosophila melanogaster (Fruit fly)).